We begin with the raw amino-acid sequence, 264 residues long: Major prion protein (264 aa).

The signal sequence occupies residues 1–24 (MVKSHIGSWILVLFVAMWSDVGLC). Residues 25–41 (KKRPKPGGGWNTGGSRY) form an interaction with ADGRG6 region. Residues 25–241 (KKRPKPGGGW…ESQAYYQRGA (217 aa)) are interaction with GRB2, ERI3 and SYN1. Residues 28–119 (PKPGGGWNTG…WNKPSKPKTN (92 aa)) are disordered. Repeat copies occupy residues 54–62 (PQGGGGWGQ), 63–70 (PHGGGWGQ), 71–78 (PHGGGWGQ), 79–86 (PHGGGWGQ), 87–94 (PHGGGWGQ), and 95–103 (PHGGGGWGQ). The tract at residues 54–103 (PQGGGGWGQPHGGGWGQPHGGGWGQPHGGGWGQPHGGGWGQPHGGGGWGQ) is 6 X 8 AA tandem repeats of P-H-G-G-G-W-G-Q. The segment covering 55 to 107 (QGGGGWGQPHGGGWGQPHGGGWGQPHGGGWGQPHGGGWGQPHGGGGWGQGGTH) has biased composition (gly residues). Residues His-72, Gly-73, Gly-74, His-80, Gly-81, Gly-82, His-88, Gly-89, Gly-90, His-96, Gly-98, and Gly-99 each coordinate Cu(2+). Residues Cys-190 and Cys-225 are joined by a disulfide bond. N-linked (GlcNAc...) asparagine glycans are attached at residues Asn-192 and Asn-208. Ala-241 is lipidated: GPI-anchor amidated alanine. Positions 242 to 264 (SVILFSSPPVILLISFLIFLIVG) are cleaved as a propeptide — removed in mature form.

Belongs to the prion family. Monomer and homodimer. Has a tendency to aggregate into amyloid fibrils containing a cross-beta spine, formed by a steric zipper of superposed beta-strands. Soluble oligomers may represent an intermediate stage on the path to fibril formation. Copper binding may promote oligomerization. Interacts with GRB2, APP, ERI3/PRNPIP and SYN1. Mislocalized cytosolically exposed PrP interacts with MGRN1; this interaction alters MGRN1 subcellular location and causes lysosomal enlargement. Interacts with APP. Interacts with KIAA1191. Interacts with ADGRG6.

It localises to the cell membrane. It is found in the golgi apparatus. In terms of biological role, its primary physiological function is unclear. May play a role in neuronal development and synaptic plasticity. May be required for neuronal myelin sheath maintenance. May promote myelin homeostasis through acting as an agonist for ADGRG6 receptor. May play a role in iron uptake and iron homeostasis. Soluble oligomers are toxic to cultured neuroblastoma cells and induce apoptosis (in vitro). Association with GPC1 (via its heparan sulfate chains) targets PRNP to lipid rafts. Also provides Cu(2+) or Zn(2+) for the ascorbate-mediated GPC1 deaminase degradation of its heparan sulfate side chains. In Bos indicus x Bos taurus (Hybrid cattle), this protein is Major prion protein (PRNP).